The chain runs to 789 residues: Cell pattern formation-associated protein stuA (789 aa).

Disordered stretches follow at residues Pro50–Gly131 and Pro205–Ser224. 3 stretches are compositionally biased toward polar residues: residues Pro55 to Thr69, Ala76 to Gly88, and Leu115 to Gly131. Residues Arg272–Pro378 enclose the HTH APSES-type domain. The segment at residues Gly306–Glu327 is a DNA-binding region (H-T-H motif). Disordered regions lie at residues Gln389–Leu459, Ser487–Gln543, and His616–Arg789. Polar residues-rich tracts occupy residues Leu419–Ala438, Ser487–Tyr529, Gly620–Val636, Gln645–Thr667, and Ser676–Ser713. The tract at residues Lys731 to Lys758 is nuclear localization domain. Positions Gln741–Ser754 are enriched in basic and acidic residues.

Belongs to the EFG1/PHD1/stuA family.

It is found in the nucleus. Functionally, transcription factor that regulates asexual reproduction. Binds the StuA-response elements (StRE) with the consensus sequence 5'-(A/T)CGCG(T/A)N(A/C)-3' at the promoters of target genes. This is Cell pattern formation-associated protein stuA from Aspergillus flavus (strain ATCC 200026 / FGSC A1120 / IAM 13836 / NRRL 3357 / JCM 12722 / SRRC 167).